Reading from the N-terminus, the 267-residue chain is tRNA pseudouridine synthase A (267 aa).

D51 acts as the Nucleophile in catalysis. Substrate is bound at residue Y109.

This sequence belongs to the tRNA pseudouridine synthase TruA family. As to quaternary structure, homodimer.

The enzyme catalyses uridine(38/39/40) in tRNA = pseudouridine(38/39/40) in tRNA. Functionally, formation of pseudouridine at positions 38, 39 and 40 in the anticodon stem and loop of transfer RNAs. This Staphylococcus aureus (strain bovine RF122 / ET3-1) protein is tRNA pseudouridine synthase A.